The primary structure comprises 65 residues: Putative beta-neurotoxin RjAa4 (65 aa).

Residues 1-64 (KEGYPMGRDG…VWDSSTNKCG (64 aa)) form the LCN-type CS-alpha/beta domain. Intrachain disulfides connect C11-C63, C15-C37, C22-C44, and C26-C46.

The protein belongs to the long (4 C-C) scorpion toxin superfamily. Sodium channel inhibitor family. Beta subfamily. Expressed by the venom gland.

The protein localises to the secreted. Its function is as follows. Beta toxins bind voltage-independently at site-4 of sodium channels (Nav) and shift the voltage of activation toward more negative potentials thereby affecting sodium channel activation and promoting spontaneous and repetitive firing. This is Putative beta-neurotoxin RjAa4 from Rhopalurus junceus (Caribbean blue scorpion).